A 137-amino-acid chain; its full sequence is Cell division protein SepF (137 aa).

Belongs to the SepF family. In terms of assembly, homodimer. Interacts with FtsZ.

The protein resides in the cytoplasm. Functionally, cell division protein that is part of the divisome complex and is recruited early to the Z-ring. Probably stimulates Z-ring formation, perhaps through the cross-linking of FtsZ protofilaments. Its function overlaps with FtsA. This is Cell division protein SepF from Carboxydothermus hydrogenoformans (strain ATCC BAA-161 / DSM 6008 / Z-2901).